The chain runs to 217 residues: Large ribosomal subunit protein uL4 (217 aa).

Residues T58–S90 form a disordered region.

This sequence belongs to the universal ribosomal protein uL4 family. As to quaternary structure, part of the 50S ribosomal subunit.

Its function is as follows. One of the primary rRNA binding proteins, this protein initially binds near the 5'-end of the 23S rRNA. It is important during the early stages of 50S assembly. It makes multiple contacts with different domains of the 23S rRNA in the assembled 50S subunit and ribosome. In terms of biological role, forms part of the polypeptide exit tunnel. This chain is Large ribosomal subunit protein uL4, found in Syntrophus aciditrophicus (strain SB).